Reading from the N-terminus, the 381-residue chain is Arf-GAP with dual PH domain-containing protein 2 (381 aa).

The Arf-GAP domain maps to 9-131; the sequence is KRLLELLRAP…FMADGETISL (123 aa). The C4-type zinc-finger motif lies at 25–48; that stretch reads CADCGAADPDWASYKLGIFICLNC. PH domains follow at residues 132 to 233 and 255 to 361; these read PGNR…AARL and NYLK…GVLS.

Highly expressed in placenta, spleen, kidney, skeletal muscle and adrenal gland. Weakly expressed in thyroid, liver, heart, lung, small intestine, peripheral blood leukocytes. Not detected in spinal cord, brain, stomach, trachea, colon, lymph node and bone marrow.

The protein localises to the cytoplasm. Its subcellular location is the cell membrane. Its function is as follows. GTPase-activating protein for the ADP ribosylation factor family (Potential). Binds phosphatidylinositol 3,4,5-trisphosphate (PtdInsP3) and inositol 1,3,4,5-tetrakisphosphate (InsP4). Possesses a stoichiometry of two binding sites for InsP4 with identical affinity. The sequence is that of Arf-GAP with dual PH domain-containing protein 2 (ADAP2) from Homo sapiens (Human).